Reading from the N-terminus, the 306-residue chain is Enoyl-CoA isomerase/hydratase MYCGRDRAFT_76805 (306 aa).

Substrate-binding positions include 103–107 (AGADL) and glycine 150.

The protein belongs to the enoyl-CoA hydratase/isomerase family.

The catalysed reaction is a (3S)-3-hydroxyacyl-CoA = a (2E)-enoyl-CoA + H2O. It carries out the reaction a 4-saturated-(3S)-3-hydroxyacyl-CoA = a (3E)-enoyl-CoA + H2O. It functions in the pathway siderophore biosynthesis. In terms of biological role, enoyl-CoA isomerase/hydratase involved in the biosynthesis of a ferrichrome A-like siderophore which may contribute to organismal virulence. The first step of siderophore biosynthesis is performed by the HMG-CoA synthase (HMGS) MYCGRDRAFT_54740 which catalyzes the generation of HMG-CoA and CoA using acetoacetyl-CoA and acetyl-CoA as substrates. The enoyl-CoA isomerase/hydratase MYCGRDRAFT_76805 then catalyzes the conversion of HMG-CoA to methylglutaconyl-CoA. The acyltransferase MYCGRDRAFT_85486 then fuses methylglutaconyl-CoA with hydroxyornithine to yield methylglutaconyl hydroxyornithine. Methylglutaconyl hydroxyornithine is then available for use by the nonribosomal peptide synthetase NRPS2 to generate the ferrichrome A-like siderophore. In Zymoseptoria tritici (strain CBS 115943 / IPO323) (Speckled leaf blotch fungus), this protein is Enoyl-CoA isomerase/hydratase MYCGRDRAFT_76805.